The sequence spans 355 residues: Protein RecA (355 aa).

ATP is bound at residue 78–85; sequence GPESSGKT.

This sequence belongs to the RecA family.

The protein localises to the cytoplasm. Functionally, can catalyze the hydrolysis of ATP in the presence of single-stranded DNA, the ATP-dependent uptake of single-stranded DNA by duplex DNA, and the ATP-dependent hybridization of homologous single-stranded DNAs. It interacts with LexA causing its activation and leading to its autocatalytic cleavage. This is Protein RecA from Rhodobacter capsulatus (Rhodopseudomonas capsulata).